We begin with the raw amino-acid sequence, 205 residues long: Guanylate kinase (205 aa).

The Guanylate kinase-like domain occupies 17–195 (SRLLVLSGPS…AVEAVERLLF (179 aa)). 24 to 31 (GPSGVGKD) contacts ATP.

The protein belongs to the guanylate kinase family.

Its subcellular location is the cytoplasm. It carries out the reaction GMP + ATP = GDP + ADP. Its function is as follows. Essential for recycling GMP and indirectly, cGMP. This Gloeobacter violaceus (strain ATCC 29082 / PCC 7421) protein is Guanylate kinase.